We begin with the raw amino-acid sequence, 628 residues long: Propionate--CoA ligase (628 aa).

It belongs to the ATP-dependent AMP-binding enzyme family.

It carries out the reaction propanoate + ATP + CoA = propanoyl-CoA + AMP + diphosphate. Its pathway is organic acid metabolism; propanoate degradation. Catalyzes the synthesis of propionyl-CoA from propionate and CoA. Also converts acetate to acetyl-CoA but with a lower specific activity. The chain is Propionate--CoA ligase (prpE) from Escherichia coli (strain K12).